A 481-amino-acid chain; its full sequence is Two-component response regulator ORR32 (481 aa).

One can recognise a Response regulatory domain in the interval 13 to 138; it reads HVMLVDDDTK…TIALWRVVAW (126 aa). Asp-66 is modified (4-aspartylphosphate).

This sequence belongs to the ARR family. Type-B subfamily. In terms of processing, two-component system major event consists of a His-to-Asp phosphorelay between a sensor histidine kinase (HK) and a response regulator (RR). In plants, the His-to-Asp phosphorelay involves an additional intermediate named Histidine-containing phosphotransfer protein (HPt). This multistep phosphorelay consists of a His-Asp-His-Asp sequential transfer of a phosphate group between first a His and an Asp of the HK protein, followed by the transfer to a conserved His of the HPt protein and finally the transfer to an Asp in the receiver domain of the RR protein.

In terms of biological role, functions as a response regulator involved in His-to-Asp phosphorelay signal transduction system. Phosphorylation of the Asp residue in the receiver domain activates the ability of the protein to promote the transcription of target genes. May directly activate some type-A response regulators in response to cytokinins. This is Two-component response regulator ORR32 from Oryza sativa subsp. japonica (Rice).